Reading from the N-terminus, the 438-residue chain is Serine hydroxymethyltransferase (438 aa).

(6S)-5,6,7,8-tetrahydrofolate-binding positions include leucine 133 and 137–139; that span reads GHL. The residue at position 242 (lysine 242) is an N6-(pyridoxal phosphate)lysine.

Belongs to the SHMT family. In terms of assembly, homodimer. Requires pyridoxal 5'-phosphate as cofactor.

It is found in the cytoplasm. It carries out the reaction (6R)-5,10-methylene-5,6,7,8-tetrahydrofolate + glycine + H2O = (6S)-5,6,7,8-tetrahydrofolate + L-serine. It functions in the pathway one-carbon metabolism; tetrahydrofolate interconversion. Its pathway is amino-acid biosynthesis; glycine biosynthesis; glycine from L-serine: step 1/1. Functionally, catalyzes the reversible interconversion of serine and glycine with tetrahydrofolate (THF) serving as the one-carbon carrier. This reaction serves as the major source of one-carbon groups required for the biosynthesis of purines, thymidylate, methionine, and other important biomolecules. Also exhibits THF-independent aldolase activity toward beta-hydroxyamino acids, producing glycine and aldehydes, via a retro-aldol mechanism. The chain is Serine hydroxymethyltransferase from Brucella canis (strain ATCC 23365 / NCTC 10854 / RM-666).